A 315-amino-acid chain; its full sequence is Ribose-phosphate pyrophosphokinase (315 aa).

ATP is bound by residues 40 to 42 and 99 to 100; these read DGE and RQ. Mg(2+) is bound by residues His-133 and Asp-175. Lys-198 is a catalytic residue. D-ribose 5-phosphate is bound by residues Arg-200, Asp-224, and 228–232; that span reads DTAHS.

The protein belongs to the ribose-phosphate pyrophosphokinase family. Class I subfamily. As to quaternary structure, homohexamer. Mg(2+) is required as a cofactor.

The protein resides in the cytoplasm. It carries out the reaction D-ribose 5-phosphate + ATP = 5-phospho-alpha-D-ribose 1-diphosphate + AMP + H(+). It participates in metabolic intermediate biosynthesis; 5-phospho-alpha-D-ribose 1-diphosphate biosynthesis; 5-phospho-alpha-D-ribose 1-diphosphate from D-ribose 5-phosphate (route I): step 1/1. Involved in the biosynthesis of the central metabolite phospho-alpha-D-ribosyl-1-pyrophosphate (PRPP) via the transfer of pyrophosphoryl group from ATP to 1-hydroxyl of ribose-5-phosphate (Rib-5-P). The protein is Ribose-phosphate pyrophosphokinase of Thermotoga maritima (strain ATCC 43589 / DSM 3109 / JCM 10099 / NBRC 100826 / MSB8).